The chain runs to 239 residues: UPF0173 metal-dependent hydrolase Msm_0779 (239 aa).

Belongs to the UPF0173 family.

The sequence is that of UPF0173 metal-dependent hydrolase Msm_0779 from Methanobrevibacter smithii (strain ATCC 35061 / DSM 861 / OCM 144 / PS).